Here is a 1097-residue protein sequence, read N- to C-terminus: DNA-directed RNA polymerase subunit beta (1097 aa).

The segment at M1071–D1097 is disordered. A compositionally biased stretch (polar residues) spans K1077–T1091.

Belongs to the RNA polymerase beta chain family. In terms of assembly, in cyanobacteria the RNAP catalytic core is composed of 2 alpha, 1 beta, 1 beta', 1 gamma and 1 omega subunit. When a sigma factor is associated with the core the holoenzyme is formed, which can initiate transcription.

The enzyme catalyses RNA(n) + a ribonucleoside 5'-triphosphate = RNA(n+1) + diphosphate. DNA-dependent RNA polymerase catalyzes the transcription of DNA into RNA using the four ribonucleoside triphosphates as substrates. The protein is DNA-directed RNA polymerase subunit beta of Prochlorococcus marinus subsp. pastoris (strain CCMP1986 / NIES-2087 / MED4).